The following is a 381-amino-acid chain: Major structural protein ORF14 (381 aa).

Residues Arg287–Glu307 are a coiled coil.

The sequence is that of Major structural protein ORF14 from Helicobacter pylori (strain 35A).